The sequence spans 231 residues: UPF0758 protein pc1765 (231 aa).

An MPN domain is found at L107 to L229. Residues H178, H180, and D191 each coordinate Zn(2+). The JAMM motif signature appears at H178–D191.

Belongs to the UPF0758 family.

The sequence is that of UPF0758 protein pc1765 from Protochlamydia amoebophila (strain UWE25).